We begin with the raw amino-acid sequence, 601 residues long: Serine/threonine-protein phosphatase 2A 65 kDa regulatory subunit A beta isoform (601 aa).

Ala2 bears the N-acetylalanine mark. HEAT repeat units lie at residues Asp20–Arg58, Thr59–Asp96, Phe97–Ala135, Leu136–Ala173, Val174–Ser212, Val213–Asp251, Leu252–Ile290, Ala291–Val333, Ile334–Asn372, Thr373–Gln411, Leu412–Phe450, Phe451–Trp489, Ala490–Ile528, Thr529–Ala567, and Leu568–Ala601.

The protein belongs to the phosphatase 2A regulatory subunit A family. As to quaternary structure, PP2A consists of a common heterodimeric core enzyme, composed of a 36 kDa catalytic subunit (subunit C) and a 65 kDa constant regulatory subunit (PR65 or subunit A), that associates with a variety of regulatory subunits. Proteins that associate with the core dimer include three families of regulatory subunits B (the R2/B/PR55/B55, R3/B''/PR72/PR130/PR59 and R5/B'/B56 families), the 48 kDa variable regulatory subunit, viral proteins, and cell signaling molecules. Interacts with IPO9. Interacts with SGO1. Interacts with RAF1.

Functionally, the PR65 subunit of protein phosphatase 2A serves as a scaffolding molecule to coordinate the assembly of the catalytic subunit and a variable regulatory B subunit. The sequence is that of Serine/threonine-protein phosphatase 2A 65 kDa regulatory subunit A beta isoform (Ppp2r1b) from Rattus norvegicus (Rat).